The chain runs to 424 residues: Tyrosine--tRNA ligase (424 aa).

Tyr-37 contributes to the L-tyrosine binding site. The 'HIGH' region motif lies at Pro-42–His-51. At Lys-144 the chain carries N6-acetyllysine. 2 residues coordinate L-tyrosine: Tyr-175 and Gln-179. The short motif at Lys-235–Thr-239 is the 'KMSKS' region element. Residue Lys-238 participates in ATP binding. An S4 RNA-binding domain is found at Ala-357–Gly-414.

It belongs to the class-I aminoacyl-tRNA synthetase family. TyrS type 1 subfamily. As to quaternary structure, homodimer.

It localises to the cytoplasm. It carries out the reaction tRNA(Tyr) + L-tyrosine + ATP = L-tyrosyl-tRNA(Tyr) + AMP + diphosphate + H(+). Catalyzes the attachment of tyrosine to tRNA(Tyr) in a two-step reaction: tyrosine is first activated by ATP to form Tyr-AMP and then transferred to the acceptor end of tRNA(Tyr). This chain is Tyrosine--tRNA ligase, found in Escherichia fergusonii (strain ATCC 35469 / DSM 13698 / CCUG 18766 / IAM 14443 / JCM 21226 / LMG 7866 / NBRC 102419 / NCTC 12128 / CDC 0568-73).